The chain runs to 302 residues: Mitochondrial adapter protein MCP1 (302 aa).

The disordered stretch occupies residues 1–35 (MIKLHEVPPEPVDPASLPHDVNAHSPEGDGNPDKR). Over 1–61 (MIKLHEVPPE…RFLWNCQKIS (61 aa)) the chain is Cytoplasmic. A PxP motif is present at residues 4 to 12 (LHEVPPEPV). The helical transmembrane segment at 62–82 (VLPMALYFPLHAANTLITPAV) threads the bilayer. Over 83-100 (SPDSAPDDVLMMVREILP) the chain is Mitochondrial intermembrane. The helical transmembrane segment at 101 to 121 (SITTKLLVAGITLHVSAGVLL) threads the bilayer. Residues 122 to 173 (RIVNNWNKPRRNRHRHLKISAEQDLSQDSIGLTGGISGYLFGLYKTFRIPPQ) are Cytoplasmic-facing. The helical transmembrane segment at 174-194 (VISGYILVPVLIYHLLIMKWV) threads the bilayer. At 195–219 (PNSISTEVDFASIKQLLSSKNRWWK) the chain is on the mitochondrial intermembrane side. A helical membrane pass occupies residues 220-240 (WLGGLVPLAILLESGVYHIGS). The Cytoplasmic segment spans residues 241–258 (GLCRYFGVRKMTSRKKWS). A helical transmembrane segment spans residues 259-276 (TAINLLTLVGFVSLIRLM). At 277–302 (KEDSTKLGPNQFESIFKKIRLLLHVN) the chain is on the mitochondrial intermembrane side.

In terms of assembly, interacts (via PxP motif) with VPS13 (via SHR-BD domain).

It localises to the mitochondrion outer membrane. Its function is as follows. Recruits the lipid transfer protein Vps13 to mitochondria thereby promoting vacuole-mitochondria contacts. Involved in mitochondrial lipid homeostasis. This is Mitochondrial adapter protein MCP1 from Saccharomyces cerevisiae (strain ATCC 204508 / S288c) (Baker's yeast).